A 434-amino-acid polypeptide reads, in one-letter code: GTPase Obg (434 aa).

The Obg domain occupies 1 to 158; it reads MFLDTAKIKV…RELQLELKIL (158 aa). The region spanning 159-336 is the OBG-type G domain; that stretch reads ADVGLVGFPS…LLDATAELLD (178 aa). Residues 165–172, 190–194, 212–215, 282–285, and 317–319 each bind GTP; these read GFPSVGKS, FTTIV, DLPG, NKMD, and SGL. Mg(2+) contacts are provided by S172 and T192. The OCT domain occupies 356 to 434; that stretch reads GFDEEEKAFE…IGKFEFEFVD (79 aa).

Belongs to the TRAFAC class OBG-HflX-like GTPase superfamily. OBG GTPase family. Monomer. It depends on Mg(2+) as a cofactor.

Its subcellular location is the cytoplasm. In terms of biological role, an essential GTPase which binds GTP, GDP and possibly (p)ppGpp with moderate affinity, with high nucleotide exchange rates and a fairly low GTP hydrolysis rate. Plays a role in control of the cell cycle, stress response, ribosome biogenesis and in those bacteria that undergo differentiation, in morphogenesis control. This chain is GTPase Obg, found in Streptococcus pneumoniae (strain ATCC 700669 / Spain 23F-1).